Reading from the N-terminus, the 231-residue chain is 7-cyano-7-deazaguanine synthase (231 aa).

An ATP-binding site is contributed by 11–21 (LSAGLDSTVNA). Zn(2+) is bound by residues cysteine 197, cysteine 205, cysteine 208, and cysteine 211.

Belongs to the QueC family. The cofactor is Zn(2+).

The catalysed reaction is 7-carboxy-7-deazaguanine + NH4(+) + ATP = 7-cyano-7-deazaguanine + ADP + phosphate + H2O + H(+). The protein operates within purine metabolism; 7-cyano-7-deazaguanine biosynthesis. Functionally, catalyzes the ATP-dependent conversion of 7-carboxy-7-deazaguanine (CDG) to 7-cyano-7-deazaguanine (preQ(0)). This chain is 7-cyano-7-deazaguanine synthase, found in Bdellovibrio bacteriovorus (strain ATCC 15356 / DSM 50701 / NCIMB 9529 / HD100).